Consider the following 191-residue polypeptide: Adenylate kinase (191 aa).

11–16 (GSGKGT) is an ATP binding site. The NMP stretch occupies residues 31-60 (STGEILRREIKDKTELGKIAEEYINQGQLL). AMP is bound by residues T32, R37, 58–60 (QLL), 86–89 (GFPR), and Q93. Positions 127–137 (KRGKLFSRKDD) are LID. R128 is a binding site for ATP. AMP contacts are provided by R134 and R145. N173 serves as a coordination point for ATP.

It belongs to the adenylate kinase family. As to quaternary structure, monomer.

The protein resides in the cytoplasm. It carries out the reaction AMP + ATP = 2 ADP. It functions in the pathway purine metabolism; AMP biosynthesis via salvage pathway; AMP from ADP: step 1/1. In terms of biological role, catalyzes the reversible transfer of the terminal phosphate group between ATP and AMP. Plays an important role in cellular energy homeostasis and in adenine nucleotide metabolism. This is Adenylate kinase from Azobacteroides pseudotrichonymphae genomovar. CFP2.